The primary structure comprises 88 residues: MFGQRQSMIVYLHSLKHAKILRKYGNIHYISKRLKYAVVYCDMEQIEHMMQKLNKLPFVKKIEQSYRPYLKTEFENSRPDRAKEYDYS.

It belongs to the UPF0298 family.

The protein resides in the cytoplasm. The sequence is that of UPF0298 protein BA_4142/GBAA_4142/BAS3844 from Bacillus anthracis.